Consider the following 89-residue polypeptide: Small ribosomal subunit protein uS15 (89 aa).

The tract at residues 1-25 (MSLSAEQKGEIVKKHARTASDTGSP) is disordered.

Belongs to the universal ribosomal protein uS15 family. Part of the 30S ribosomal subunit. Forms a bridge to the 50S subunit in the 70S ribosome, contacting the 23S rRNA.

One of the primary rRNA binding proteins, it binds directly to 16S rRNA where it helps nucleate assembly of the platform of the 30S subunit by binding and bridging several RNA helices of the 16S rRNA. In terms of biological role, forms an intersubunit bridge (bridge B4) with the 23S rRNA of the 50S subunit in the ribosome. This Alkalilimnicola ehrlichii (strain ATCC BAA-1101 / DSM 17681 / MLHE-1) protein is Small ribosomal subunit protein uS15.